The chain runs to 461 residues: MTALFQQLPSVDKILKTSQGLQLITEFGHTAVVATCRELLTQARQFIKKNNQLPEYFSNFDRTFVEIHSRLQKQNQVQIKAVHNLTGTVLHTNLGRALWSEAAQQAALSVMQKNVSLEYDLDKGKRSHRDNYISELLCKLTGAEAACIVNNNAAAVLLMLATFAQGKEVIISRGELIEIGGAFRIPDIMEQAGCYLVEVGTTNRTHLKDYRNAITENTAFLMKVHSSNYQICGFTSSVSEEELAELGREMNVPVVTDLGSGALIDLSQYGLPKESTVQEKVAQGVGLVSFSGDKLLGGVQAGIIVGKKEWIEQLQAHPLKRALRCDKVILAGLEATLRLYLNPEKLTEKLPTLYLLTQPLKQLKINAMRLKERLESRLNSQFDIQIEASQAQIGSGSQPMERIPSVAVTIAEKTNVKLSALSARFKQLSQPIIGRMENGKIWLDLRSLAAIETLLNTLDEL.

Lys-294 carries the post-translational modification N6-(pyridoxal phosphate)lysine.

This sequence belongs to the SelA family. Pyridoxal 5'-phosphate is required as a cofactor.

The protein resides in the cytoplasm. The enzyme catalyses L-seryl-tRNA(Sec) + selenophosphate + H(+) = L-selenocysteinyl-tRNA(Sec) + phosphate. It participates in aminoacyl-tRNA biosynthesis; selenocysteinyl-tRNA(Sec) biosynthesis; selenocysteinyl-tRNA(Sec) from L-seryl-tRNA(Sec) (bacterial route): step 1/1. Converts seryl-tRNA(Sec) to selenocysteinyl-tRNA(Sec) required for selenoprotein biosynthesis. The sequence is that of L-seryl-tRNA(Sec) selenium transferase from Haemophilus influenzae (strain 86-028NP).